The sequence spans 314 residues: Transcription factor SOX-12 (314 aa).

Disordered stretches follow at residues 1 to 40 and 101 to 287; these read MVQQ…SGHI and MADY…FEFP. A DNA-binding region (HMG box) is located at residues 40–108; sequence IKRPMNAFMV…KHMADYPDYK (69 aa). Residues 149-159 show a composition bias toward gly residues; the sequence is RASGGPLGGGA. The span at 162 to 173 shows a compositional bias: acidic residues; sequence PEDDDEDEEEEL. Over residues 174–187 the composition is skewed to basic and acidic residues; it reads LEVRLLETPGRELW. Residues 191-217 are compositionally biased toward low complexity; the sequence is PAGRAARGPAERAQGPSGEGAAASAAS. A compositionally biased stretch (acidic residues) spans 221-243; that stretch reads SEDEEPEEEEEEAATAEEGEEET. The segment at 282-314 is required for transcriptional activation activity and synergistic coactivation of transcriptional activity with POU3F2; it reads SHFEFPDYCTPEVTEMIAGDWRSSSIADLVFTY.

In terms of tissue distribution, expressed in splenic and thymic regulatory T-cells (at protein level). Expressed in embryonic molar and incisor teeth.

The protein resides in the nucleus. Its function is as follows. Transcription factor that binds to DNA at the consensus sequence 5'-ACCAAAG-3'. Acts as a transcriptional activator. Binds cooperatively with POU3F2/BRN2 or POU3F1/OCT6 to gene promoters, which enhances transcriptional activation. Involved in the differentiation of naive CD4-positive T-cells into peripherally induced regulatory T (pT reg) cells under inflammatory conditions. Binds to the promoter region of the FOXP3 gene and promotes its transcription, and might thereby contribute to pT reg cell differentiation in the spleen and lymph nodes during inflammation. Plays a redundant role with SOX4 and SOX11 in cell survival of developing tissues such as the neural tube, branchial arches and somites, thereby contributing to organogenesis. The polypeptide is Transcription factor SOX-12 (Sox12) (Mus musculus (Mouse)).